Reading from the N-terminus, the 301-residue chain is Growth-regulating factor 2 (301 aa).

Positions 11–46 (LFTATQWQELEHQALIYKYMAAGAPVPPDLLLHLRH) constitute a QLQ domain. 2 short sequence motifs (bipartite nuclear localization signal) span residues 83–102 (RRVE…KKWR) and 120–127 (RGKNRSRK). Residues 87 to 131 (DPEPGRCRRTDGKKWRCSREAYGESKYCEKHMHRGKNRSRKPVEM) form the WRC domain.

The protein belongs to the GRF family.

Its subcellular location is the nucleus. Functionally, transcription activator that plays a regulatory role in gibberellin-induced stem elongation. This chain is Growth-regulating factor 2 (GRF2), found in Oryza sativa subsp. japonica (Rice).